We begin with the raw amino-acid sequence, 306 residues long: Glutaminase (306 aa).

Substrate contacts are provided by Ser66, Asn116, Glu159, Asn166, Tyr190, Tyr242, and Val260.

This sequence belongs to the glutaminase family. As to quaternary structure, homotetramer.

The catalysed reaction is L-glutamine + H2O = L-glutamate + NH4(+). This Caulobacter vibrioides (strain ATCC 19089 / CIP 103742 / CB 15) (Caulobacter crescentus) protein is Glutaminase.